A 223-amino-acid chain; its full sequence is Keratin-associated protein 5-4 (223 aa).

14 tandem repeats follow at residues 21-24, 27-30, 79-82, 89-92, 107-110, 117-120, 135-138, 145-148, 155-158, 173-176, 183-186, 193-196, 203-206, and 213-216. The interval 21-216 is 14 X 4 AA repeats of C-C-X-P; the sequence is CCKPVCCCVP…CCCQSSCCAP (196 aa).

This sequence belongs to the KRTAP type 5 family. Interacts with hair keratins. Expressed during the active phases of the hair cycle in the medulla and the inner root sheath of the forming hair. Also expressed in the upper layers of the epidermis of skin.

In terms of biological role, in the hair cortex, hair keratin intermediate filaments are embedded in an interfilamentous matrix, consisting of hair keratin-associated protein (KRTAP), which are essential for the formation of a rigid and resistant hair shaft through their extensive disulfide bond cross-linking with abundant cysteine residues of hair keratins. The matrix proteins include the high-sulfur and high-glycine-tyrosine keratins. This Mus musculus (Mouse) protein is Keratin-associated protein 5-4.